Here is a 298-residue protein sequence, read N- to C-terminus: Zinc import ATP-binding protein ZnuC (298 aa).

The ABC transporter domain maps to isoleucine 17–arginine 232. Glycine 49–serine 56 contributes to the ATP binding site. Residues arginine 273–alanine 298 form a disordered region. Basic and acidic residues predominate over residues cysteine 276–alanine 298.

It belongs to the ABC transporter superfamily. Zinc importer (TC 3.A.1.15.5) family. The complex is composed of two ATP-binding proteins (ZnuC), two transmembrane proteins (ZnuB) and a solute-binding protein (ZnuA).

Its subcellular location is the cell inner membrane. The catalysed reaction is Zn(2+)(out) + ATP(in) + H2O(in) = Zn(2+)(in) + ADP(in) + phosphate(in) + H(+)(in). Functionally, part of the ABC transporter complex ZnuABC involved in zinc import. Responsible for energy coupling to the transport system. The sequence is that of Zinc import ATP-binding protein ZnuC from Brucella melitensis biotype 1 (strain ATCC 23456 / CCUG 17765 / NCTC 10094 / 16M).